We begin with the raw amino-acid sequence, 320 residues long: Cytochrome c biogenesis protein CcsA (320 aa).

Helical transmembrane passes span I13–V33, G46–G66, L73–L93, L102–L122, M147–I167, I226–N246, E259–H274, and V289–I309.

This sequence belongs to the CcmF/CycK/Ccl1/NrfE/CcsA family. As to quaternary structure, may interact with Ccs1.

Its subcellular location is the plastid. It localises to the chloroplast thylakoid membrane. Functionally, required during biogenesis of c-type cytochromes (cytochrome c6 and cytochrome f) at the step of heme attachment. The chain is Cytochrome c biogenesis protein CcsA from Gossypium hirsutum (Upland cotton).